A 283-amino-acid chain; its full sequence is 4-diphosphocytidyl-2-C-methyl-D-erythritol kinase (283 aa).

Residue lysine 12 is part of the active site. Residue 94–104 (PAQAGLGGGSS) coordinates ATP. Aspartate 136 is a catalytic residue.

The protein belongs to the GHMP kinase family. IspE subfamily.

The catalysed reaction is 4-CDP-2-C-methyl-D-erythritol + ATP = 4-CDP-2-C-methyl-D-erythritol 2-phosphate + ADP + H(+). It functions in the pathway isoprenoid biosynthesis; isopentenyl diphosphate biosynthesis via DXP pathway; isopentenyl diphosphate from 1-deoxy-D-xylulose 5-phosphate: step 3/6. Functionally, catalyzes the phosphorylation of the position 2 hydroxy group of 4-diphosphocytidyl-2C-methyl-D-erythritol. This Acidovorax ebreus (strain TPSY) (Diaphorobacter sp. (strain TPSY)) protein is 4-diphosphocytidyl-2-C-methyl-D-erythritol kinase.